A 230-amino-acid polypeptide reads, in one-letter code: Iron-dependent repressor IdeR (230 aa).

One can recognise an HTH dtxR-type domain in the interval Leu4–Thr65.

It belongs to the DtxR/MntR family. In terms of assembly, homodimer.

The protein resides in the cytoplasm. In terms of biological role, metal-dependent DNA-binding protein that controls transcription of many genes involved in iron metabolism. The polypeptide is Iron-dependent repressor IdeR (ideR) (Mycobacterium leprae (strain TN)).